A 303-amino-acid chain; its full sequence is Recombination-associated protein RdgC (303 aa).

This sequence belongs to the RdgC family.

It is found in the cytoplasm. Its subcellular location is the nucleoid. Functionally, may be involved in recombination. This chain is Recombination-associated protein RdgC, found in Shewanella sediminis (strain HAW-EB3).